A 163-amino-acid chain; its full sequence is Protein LOL5 (163 aa).

2 stretches are compositionally biased toward polar residues: residues 1–25 (MSQL…QPQS) and 33–44 (LQPQHPPSSTAH). Positions 1–51 (MSQLPLASQATTTDLVSTTAMQPQSEGIVDESLQPQHPPSSTAHDSPCLQD) are disordered. Putative zinc finger regions lie at residues 70–100 (QMVC…MNYV) and 108–138 (KVHC…VTEI).

The protein localises to the nucleus. Involved in plant growth and disease resistance. This is Protein LOL5 (LOL5) from Oryza sativa subsp. japonica (Rice).